We begin with the raw amino-acid sequence, 334 residues long: MYNTDVVIIGAGPVGLFAVFQAGMLGMKCHVIDAQEVIGGQCITLYPEKPIYDIPAYPKIAAEELIKQLELQAAPFNPIYHLNQQAIELNKQDDFFEIKTSKNTLIKGKVIIIAAGAGSFGPNKPPLANIEDFESKSVFYFINDKSKFAGKNIVIAGGGDSAVDWAIFLSDIANKIYLVHRRDKFTAAPESVRQLRHIAETDKIELVTGYQLNALDGNNAELQSVIVKDLHNNTRKLDANILLPFFGLKQDLGSLANWGLNVKHHHIEVDSSYYQTNIEGIYAIGDIAHYGGKLKLILTGFAEAASSLHHAYSRVFDGKALHFEYSTTKYGEKK.

Residues Asp33, Gln41, Tyr46, Ala86, Phe120, Asp286, and Thr327 each coordinate FAD.

Belongs to the ferredoxin--NADP reductase type 2 family. Homodimer. FAD is required as a cofactor.

The catalysed reaction is 2 reduced [2Fe-2S]-[ferredoxin] + NADP(+) + H(+) = 2 oxidized [2Fe-2S]-[ferredoxin] + NADPH. In Rickettsia massiliae (strain Mtu5), this protein is Ferredoxin--NADP reductase.